The primary structure comprises 1109 residues: Cation channel sperm-associated auxiliary subunit beta (1109 aa).

Topologically, residues 1–1055 are extracellular; it reads MESPLIYVML…QIYVDEVPLP (1055 aa). Cysteines 35 and 60 form a disulfide. Residues Asn-66, Asn-90, and Asn-118 are each glycosylated (N-linked (GlcNAc...) asparagine). Cys-189 and Cys-302 are joined by a disulfide. N-linked (GlcNAc...) asparagine glycosylation occurs at Asn-321. An intrachain disulfide couples Cys-330 to Cys-343. Asn-672 is a glycosylation site (N-linked (GlcNAc...) asparagine). Intrachain disulfides connect Cys-720–Cys-818, Cys-831–Cys-1039, Cys-913–Cys-922, and Cys-924–Cys-939. Residues Asn-915 and Asn-923 are each glycosylated (N-linked (GlcNAc...) asparagine). An N-linked (GlcNAc...) asparagine glycan is attached at Asn-1017. The helical transmembrane segment at 1056-1078 threads the bilayer; it reads FPGHALIAVATSVVLGVLIFIAF. The Cytoplasmic portion of the chain corresponds to 1079-1109; the sequence is VFQLRNIHPLKALKKSIRGNPGLTSSTTVSS.

As to quaternary structure, component of the CatSper complex or CatSpermasome composed of the core pore-forming members CATSPER1, CATSPER2, CATSPER3 and CATSPER4 as well as auxiliary members CATSPERB, CATSPERG2, CATSPERD, CATSPERE, CATSPERZ, C2CD6/CATSPERT, SLCO6C1, TMEM249, TMEM262 and EFCAB9. HSPA1 may be an additional auxiliary complex member. The core complex members CATSPER1, CATSPER2, CATSPER3 and CATSPER4 form a heterotetrameric channel. The auxiliary CATSPERB, CATSPERG2, CATSPERD and CATSPERE subunits form a pavilion-like structure over the pore which stabilizes the complex through interactions with CATSPER4, CATSPER3, CATSPER1 and CATSPER2 respectively. SLCO6C1 interacts with CATSPERE and TMEM262/CATSPERH interacts with CATSPERB, further stabilizing the complex. C2CD6/CATSPERT interacts at least with CATSPERD and is required for targeting the CatSper complex in the flagellar membrane. Testis-specific. Specifically present in the principal piece of sperm tail (at protein level). Specifically expressed in the seminiferous tubules but not in the interstitial cells. Within the tubules, it is expressed in spermatocytes and spermatids, but not in spermatogonia.

The protein localises to the cell projection. It is found in the cilium. It localises to the flagellum membrane. Its function is as follows. Auxiliary component of the CatSper complex, a complex involved in sperm cell hyperactivation. Sperm cell hyperactivation is needed for sperm motility which is essential late in the preparation of sperm for fertilization. In Mus musculus (Mouse), this protein is Cation channel sperm-associated auxiliary subunit beta.